Here is a 339-residue protein sequence, read N- to C-terminus: Lipopolysaccharide glucosyltransferase WaaO (339 aa).

Residues 34–39 (GTDKNF) and 131–132 (DA) each bind UDP. Mg(2+) is bound by residues Asp-131 and Asp-133. Short sequence motifs (DXD) lie at residues 131–133 (DAD) and 220–222 (DQD). Residue His-265 coordinates Mg(2+). 265–271 (HYIGPTK) is a UDP binding site.

This sequence belongs to the glycosyltransferase 8 family. Mg(2+) is required as a cofactor.

The catalysed reaction is UDP-glucose + lipopolysaccharide = UDP + alpha-D-glucosyl-lipopolysaccharide.. The enzyme catalyses alpha-D-Gal-(1-&gt;6)-alpha-D-Glc-(1-&gt;3)-[L-alpha-D-Hep-(1-&gt;7)]-4-O-PO3(2-)-L-alpha-D-Hep-(1-&gt;3)-4-O-PO3(2-)-L-alpha-D-Hep-(1-&gt;5)-[alpha-Kdo-(2-&gt;4)]-alpha-Kdo-(2-&gt;6)-lipid A + UDP-alpha-D-glucose = alpha-D-Glc-(1-&gt;3)-[alpha-D-Gal-(1-&gt;6)]-alpha-D-Glc-(1-&gt;3)-[L-alpha-D-Hep-(1-&gt;7)]-4-O-PO3(2-)-L-alpha-D-Hep-(1-&gt;3)-4-O-PO3(2-)-L-alpha-D-Hep-(1-&gt;5)-[alpha-Kdo-(2-&gt;4)]-alpha-Kdo-(2-&gt;6)-lipid A + UDP + H(+). Its pathway is bacterial outer membrane biogenesis; LPS core biosynthesis. Functionally, glucosyltransferase involved in the biosynthesis of the core oligosaccharide region of lipopolysaccharide (LPS). Catalyzes the addition of a second glucose (glucose II) to the first outer-core glucose (glucose I). In vitro, can add multiple glucose residues to its lipid acceptor. Activity does not require the branched galactose added by WaaB, but it is higher in the presence of this branched galactose. In the absence of a lipid acceptor, can hydrolyze UDP-glucose, but not UDP-galactose. The polypeptide is Lipopolysaccharide glucosyltransferase WaaO (Escherichia coli (strain K12)).